The chain runs to 742 residues: UPF0313 protein MA_4618 (742 aa).

The tract at residues 1–125 is disordered; it reads MGVRKQTMVK…SFSSSLPASK (125 aa). A unknown region spans residues 1 to 128; the sequence is MGVRKQTMVK…SSLPASKFLP (128 aa). Basic and acidic residues-rich tracts occupy residues 17-40 and 49-73; these read ENKK…ERAG and KKVE…KAEG. Residues 106-115 are compositionally biased toward basic residues; it reads TGKKEKKQKK. The UPF0313 stretch occupies residues 129–742; sequence MSPEEVKARG…KCLIRRKEKQ (614 aa). The 270-residue stretch at 438–707 folds into the Radical SAM core domain; the sequence is ALEMVKFSLT…AMQRALMHYR (270 aa). [4Fe-4S] cluster is bound by residues cysteine 452, cysteine 456, and cysteine 459.

This sequence in the C-terminal section; belongs to the UPF0313 family. It depends on [4Fe-4S] cluster as a cofactor.

The polypeptide is UPF0313 protein MA_4618 (Methanosarcina acetivorans (strain ATCC 35395 / DSM 2834 / JCM 12185 / C2A)).